Here is a 1143-residue protein sequence, read N- to C-terminus: AP-3 complex subunit delta (1143 aa).

8 HEAT repeats span residues 129–166 (DLARELANDILTLLSTQKTHILKRAITVLYKIFLRYPE), 167–203 (SLRPAFPKLREKLDDPEPSVVSCSVNVICELARRNPK), 205–242 (YLPLAPVLFRILTNTTNNYWMLIKIVKLFAALTPHEPR), 245–279 (KKLIDPLTNIINSSPSVSLLYECIQTCITGMSDHI), 280–317 (PLMKLCISKLRTLIEHNDQNLKYLGLLALNNIMKIHPK), 318–354 (AVSEHRDLVLNCLEDDDISIRLRALDLLPGMTSKKNI), 356–389 (DIVFKLLDHLDNAEGQYKEQIIEKIIELCSMGTY), and 416–455 (LIASQLLDVVIRVKIVRAYSTRQMIELLKNPKLMSNPTEG). 5 disordered regions span residues 520–541 (KIPSLDDDDEEEEAQEEEDQNE), 634–692 (QEPI…RHPI), 704–728 (KQANNPYMLGGKVSKKLSTNDPENI), 741–792 (HVGA…NDAL), and 829–899 (KKNA…QAAA). Acidic residues predominate over residues 524–540 (LDDDDEEEEAQEEEDQN). Positions 526 to 550 (DDDEEEEAQEEEDQNEITHEIVQEC) form a coiled coil. Basic residues predominate over residues 653-662 (HQKKHHKHHR). The segment covering 666 to 675 (DGDDDEDDET) has biased composition (acidic residues). Residues 814–835 (TDIIKEKEREMAMLAKKNAKLS) are a coiled coil. Residues 840-849 (PSTANYSEVT) show a composition bias toward polar residues. Low complexity-rich tracts occupy residues 854 to 867 (APAKKATKKAAAGS) and 881 to 899 (KPAATSSTTTTTKSTQAAA). The region spanning 914 to 1016 (KTILDDDNFK…FTLLASPSSS (103 aa)) is the GAE domain.

It belongs to the adaptor complexes large subunit family. As to quaternary structure, adaptor protein complex 3 (AP-3) is a heterotetramer composed of two large adaptins (delta-type subunit and beta-type subunit), a medium adaptin (mu-type subunit) and a small adaptin (sigma-type subunit).

The protein resides in the endosome membrane. In terms of biological role, part of the AP-3 complex, an adaptor-related complex which is essential for the compartmentalization of the endocytic pathway. This is AP-3 complex subunit delta (ap3d1) from Dictyostelium discoideum (Social amoeba).